A 179-amino-acid polypeptide reads, in one-letter code: Large ribosomal subunit protein uL5 (179 aa).

Belongs to the universal ribosomal protein uL5 family. As to quaternary structure, part of the 50S ribosomal subunit; part of the 5S rRNA/L5/L18/L25 subcomplex. Contacts the 5S rRNA and the P site tRNA. Forms a bridge to the 30S subunit in the 70S ribosome.

Functionally, this is one of the proteins that bind and probably mediate the attachment of the 5S RNA into the large ribosomal subunit, where it forms part of the central protuberance. In the 70S ribosome it contacts protein S13 of the 30S subunit (bridge B1b), connecting the 2 subunits; this bridge is implicated in subunit movement. Contacts the P site tRNA; the 5S rRNA and some of its associated proteins might help stabilize positioning of ribosome-bound tRNAs. In Vibrio parahaemolyticus serotype O3:K6 (strain RIMD 2210633), this protein is Large ribosomal subunit protein uL5.